The chain runs to 505 residues: MAQIDFRKKINWHRRYRSPQGVKTEHEILRIFESDRGRIINSPAIRRLQQKTQVFPLERNAAVRTRLTHSMEVQQVGRYIAKEILSRMKELKLLEAYGLDELTGPFESIVEMSCLMHDIGNPPFGHFGEAAINDWFRQRLHPEDAESQPLTDDRCSVAALRLRDGEEPLNELRRKIRQDLCHFEGNAQGIRLVHTLMRMNLTWAQVGGILKYTRPAWWRGETPETHHYLMKKPGYYLSEEAYIARLRKELNLALYSRFPLTWIMEAADDISYCVADLEDAVEKRIFTVEQLYHHLHEAWGQHEKGSLFSLVVENAWEKSRSNSLSRSTEDQFFMYLRVNTLNKLVPYAAQRFIDNLPAIFAGTFNHALLEDASECSDLLKLYKNVAVKHVFSHPDVEQLELQGYRVISGLLEIYRPLLSLSLSDFTELVEKERVKRFPIESRLFHKLSTRHRLAYVEAVSKLPSDYPEFPLWEYYYRCRLLQDYISGMTDLYAWDEYRRLMAVEQ.

The HD domain occupies 66–273 (RLTHSMEVQQ…MEAADDISYC (208 aa)).

Belongs to the dGTPase family. Type 1 subfamily. Homotetramer. Requires Mg(2+) as cofactor.

It catalyses the reaction dGTP + H2O = 2'-deoxyguanosine + triphosphate + H(+). Its function is as follows. dGTPase preferentially hydrolyzes dGTP over the other canonical NTPs. The protein is Deoxyguanosinetriphosphate triphosphohydrolase of Shigella boydii serotype 18 (strain CDC 3083-94 / BS512).